Here is a 360-residue protein sequence, read N- to C-terminus: MNQSVQTIMIIAGGTGGHIFPGLSVARYLMNHGYKVVWIGSKDRIESELVPVYNIDIKYICIQGLRGKKIYQKLITLLFLIFFAMYQSFKIIRCWKPDIVLSMGGYVSGPSSLVAWLYGIPVIIHEQNRIMGLTNRYVSRFAKKILQGFPNTVNGAITSGNPLRYEILSIPDPVHRLEGRTGPIRVLVVGGSTGSFIFNKVIPEVFGKLFGKLIIWHQSGKKGFNDTIQAYKKLHCNSSNYKVVPFIDNMAHAYSWADVIISRSGALMVSEISYVGLPAIFVPFNYHKDYQQYWNAFQLVKSGSAIIIEQERFTSDYVSIILGNWNRKVLLNMAILSKSLEMSNATQLVAQTVMRYLNGK.

UDP-N-acetyl-alpha-D-glucosamine-binding positions include 15–17, asparagine 128, arginine 164, serine 192, isoleucine 247, and glutamine 292; that span reads TGG.

It belongs to the glycosyltransferase 28 family. MurG subfamily.

It localises to the cell inner membrane. The catalysed reaction is di-trans,octa-cis-undecaprenyl diphospho-N-acetyl-alpha-D-muramoyl-L-alanyl-D-glutamyl-meso-2,6-diaminopimeloyl-D-alanyl-D-alanine + UDP-N-acetyl-alpha-D-glucosamine = di-trans,octa-cis-undecaprenyl diphospho-[N-acetyl-alpha-D-glucosaminyl-(1-&gt;4)]-N-acetyl-alpha-D-muramoyl-L-alanyl-D-glutamyl-meso-2,6-diaminopimeloyl-D-alanyl-D-alanine + UDP + H(+). The protein operates within cell wall biogenesis; peptidoglycan biosynthesis. In terms of biological role, cell wall formation. Catalyzes the transfer of a GlcNAc subunit on undecaprenyl-pyrophosphoryl-MurNAc-pentapeptide (lipid intermediate I) to form undecaprenyl-pyrophosphoryl-MurNAc-(pentapeptide)GlcNAc (lipid intermediate II). The polypeptide is UDP-N-acetylglucosamine--N-acetylmuramyl-(pentapeptide) pyrophosphoryl-undecaprenol N-acetylglucosamine transferase (Blochmanniella floridana).